The chain runs to 274 residues: Octanoyltransferase LipM (274 aa).

Residues 32–244 form the BPL/LPL catalytic domain; the sequence is GEVPPTLRFY…GFARALGLTL (213 aa). Catalysis depends on C146, which acts as the Acyl-thioester intermediate.

It belongs to the octanoyltransferase LipM family. In terms of assembly, monomer.

It catalyses the reaction octanoyl-[ACP] + L-lysyl-[protein] = N(6)-octanoyl-L-lysyl-[protein] + holo-[ACP] + H(+). The protein operates within protein modification; protein lipoylation via endogenous pathway; protein N(6)-(lipoyl)lysine from octanoyl-[acyl-carrier-protein]. In terms of biological role, catalyzes the transfer of endogenously produced octanoic acid from octanoyl-acyl-carrier-protein onto the lipoyl domain of GcvH, an intermediate carrier during protein lipoylation. The chain is Octanoyltransferase LipM from Symbiobacterium thermophilum (strain DSM 24528 / JCM 14929 / IAM 14863 / T).